The following is a 377-amino-acid chain: Glutamate 5-kinase (377 aa).

K22 lines the ATP pocket. S62, D149, and N161 together coordinate substrate. Residues 181–182 (TD) and 223–229 (TGGMVTK) contribute to the ATP site. The PUA domain occupies 285 to 359 (QGTLVADSGA…GRNTAQLKRF (75 aa)).

It belongs to the glutamate 5-kinase family.

The protein localises to the cytoplasm. It carries out the reaction L-glutamate + ATP = L-glutamyl 5-phosphate + ADP. It participates in amino-acid biosynthesis; L-proline biosynthesis; L-glutamate 5-semialdehyde from L-glutamate: step 1/2. Its function is as follows. Catalyzes the transfer of a phosphate group to glutamate to form L-glutamate 5-phosphate. This chain is Glutamate 5-kinase, found in Bifidobacterium adolescentis (strain ATCC 15703 / DSM 20083 / NCTC 11814 / E194a).